The sequence spans 255 residues: Probable iron chelatin transport ATP-binding protein jhp_0821 (255 aa).

Positions 3–240 (LEVKNLSFKY…HNLSALYDTP (238 aa)) constitute an ABC transporter domain. 35–42 (APNGSGKT) is a binding site for ATP.

The protein belongs to the ABC transporter superfamily.

It localises to the cell inner membrane. In terms of biological role, part of a binding-protein-dependent transport system for an iron chelatin. Probably responsible for energy coupling to the transport system (Potential). The chain is Probable iron chelatin transport ATP-binding protein jhp_0821 from Helicobacter pylori (strain J99 / ATCC 700824) (Campylobacter pylori J99).